The chain runs to 134 residues: Cytochrome c-type biogenesis protein CcmE (134 aa).

Over 1-7 the chain is Cytoplasmic; sequence MKRKYRR. The helical; Signal-anchor for type II membrane protein transmembrane segment at 8-28 threads the bilayer; it reads LFVVIITLSIFAGSVVFVLGK. The Periplasmic segment spans residues 29–134; sequence LKNNVSFFYT…MPNKYKTNNL (106 aa). Histidine 120 and tyrosine 124 together coordinate heme.

The protein belongs to the CcmE/CycJ family.

It localises to the cell inner membrane. Functionally, heme chaperone required for the biogenesis of c-type cytochromes. Transiently binds heme delivered by CcmC and transfers the heme to apo-cytochromes in a process facilitated by CcmF and CcmH. The sequence is that of Cytochrome c-type biogenesis protein CcmE from Ehrlichia ruminantium (strain Gardel).